Reading from the N-terminus, the 278-residue chain is Large ribosomal subunit protein uL2 (278 aa).

Residues 222–278 (GVVMNPIDHPHGGGEGRTSGGRHPVTPWGKPTKGKKTRSNKSTNKFILISRHKRKKK) are disordered.

This sequence belongs to the universal ribosomal protein uL2 family. As to quaternary structure, part of the 50S ribosomal subunit. Forms a bridge to the 30S subunit in the 70S ribosome.

One of the primary rRNA binding proteins. Required for association of the 30S and 50S subunits to form the 70S ribosome, for tRNA binding and peptide bond formation. It has been suggested to have peptidyltransferase activity; this is somewhat controversial. Makes several contacts with the 16S rRNA in the 70S ribosome. The polypeptide is Large ribosomal subunit protein uL2 (Afipia carboxidovorans (strain ATCC 49405 / DSM 1227 / KCTC 32145 / OM5) (Oligotropha carboxidovorans)).